The sequence spans 1067 residues: DNA-directed RNA polymerase subunit beta (1067 aa).

This sequence belongs to the RNA polymerase beta chain family. In plastids the minimal PEP RNA polymerase catalytic core is composed of four subunits: alpha, beta, beta', and beta''. When a (nuclear-encoded) sigma factor is associated with the core the holoenzyme is formed, which can initiate transcription.

Its subcellular location is the plastid. It is found in the chloroplast. It carries out the reaction RNA(n) + a ribonucleoside 5'-triphosphate = RNA(n+1) + diphosphate. Its function is as follows. DNA-dependent RNA polymerase catalyzes the transcription of DNA into RNA using the four ribonucleoside triphosphates as substrates. This chain is DNA-directed RNA polymerase subunit beta, found in Ipomoea purpurea (Common morning glory).